We begin with the raw amino-acid sequence, 305 residues long: Cytochrome c biogenesis protein CcsA (305 aa).

The next 8 membrane-spanning stretches (helical) occupy residues 11 to 31, 37 to 57, 63 to 83, 96 to 116, 141 to 161, 212 to 232, 246 to 263, and 275 to 295; these read GLGF…FWAV, TGIV…QLVL, GHFP…ACTL, IVAA…SFAL, VIMV…AVLL, TITV…VWAN, TWAL…HTRL, and VAVV…LLGI.

This sequence belongs to the CcmF/CycK/Ccl1/NrfE/CcsA family. In terms of assembly, may interact with ccs1.

Its subcellular location is the cellular thylakoid membrane. Functionally, required during biogenesis of c-type cytochromes (cytochrome c6 and cytochrome f) at the step of heme attachment. The chain is Cytochrome c biogenesis protein CcsA from Parasynechococcus marenigrum (strain WH8102).